Here is a 419-residue protein sequence, read N- to C-terminus: L-rhamnose isomerase (419 aa).

Mn(2+)-binding residues include histidine 262, aspartate 294, and aspartate 296.

It belongs to the rhamnose isomerase family. As to quaternary structure, homotetramer. Mn(2+) is required as a cofactor.

It localises to the cytoplasm. It carries out the reaction L-rhamnopyranose = L-rhamnulose. It participates in carbohydrate degradation; L-rhamnose degradation; glycerone phosphate from L-rhamnose: step 1/3. Its function is as follows. Catalyzes the interconversion of L-rhamnose and L-rhamnulose. The sequence is that of L-rhamnose isomerase from Escherichia coli O17:K52:H18 (strain UMN026 / ExPEC).